A 510-amino-acid polypeptide reads, in one-letter code: Lysine--tRNA ligase (510 aa).

Residues glutamate 420 and glutamate 427 each contribute to the Mg(2+) site.

This sequence belongs to the class-II aminoacyl-tRNA synthetase family. In terms of assembly, homodimer. Requires Mg(2+) as cofactor.

The protein localises to the cytoplasm. The enzyme catalyses tRNA(Lys) + L-lysine + ATP = L-lysyl-tRNA(Lys) + AMP + diphosphate. This Vibrio vulnificus (strain YJ016) protein is Lysine--tRNA ligase.